The chain runs to 249 residues: ATP synthase subunit a (249 aa).

6 helical membrane-spanning segments follow: residues 29 to 49 (ASLF…FATS), 84 to 104 (FFPF…LGMF), 114 to 134 (IIVT…YGFY), 140 to 160 (FFGI…VASI), 193 to 213 (FVAS…LPLI), and 216 to 236 (VAMT…FAVL).

It belongs to the ATPase A chain family. As to quaternary structure, F-type ATPases have 2 components, CF(1) - the catalytic core - and CF(0) - the membrane proton channel. CF(1) has five subunits: alpha(3), beta(3), gamma(1), delta(1), epsilon(1). CF(0) has three main subunits: a(1), b(2) and c(9-12). The alpha and beta chains form an alternating ring which encloses part of the gamma chain. CF(1) is attached to CF(0) by a central stalk formed by the gamma and epsilon chains, while a peripheral stalk is formed by the delta and b chains.

It is found in the cell inner membrane. Functionally, key component of the proton channel; it plays a direct role in the translocation of protons across the membrane. This chain is ATP synthase subunit a, found in Agrobacterium fabrum (strain C58 / ATCC 33970) (Agrobacterium tumefaciens (strain C58)).